A 212-amino-acid polypeptide reads, in one-letter code: Imidazole glycerol phosphate synthase subunit HisH (212 aa).

Residues 2 to 212 (QTAIIDYGMG…LTMLKNFLNW (211 aa)) form the Glutamine amidotransferase type-1 domain. Cys-85 functions as the Nucleophile in the catalytic mechanism. Residues His-194 and Glu-196 contribute to the active site.

In terms of assembly, heterodimer of HisH and HisF.

It localises to the cytoplasm. It catalyses the reaction 5-[(5-phospho-1-deoxy-D-ribulos-1-ylimino)methylamino]-1-(5-phospho-beta-D-ribosyl)imidazole-4-carboxamide + L-glutamine = D-erythro-1-(imidazol-4-yl)glycerol 3-phosphate + 5-amino-1-(5-phospho-beta-D-ribosyl)imidazole-4-carboxamide + L-glutamate + H(+). It carries out the reaction L-glutamine + H2O = L-glutamate + NH4(+). It participates in amino-acid biosynthesis; L-histidine biosynthesis; L-histidine from 5-phospho-alpha-D-ribose 1-diphosphate: step 5/9. Functionally, IGPS catalyzes the conversion of PRFAR and glutamine to IGP, AICAR and glutamate. The HisH subunit catalyzes the hydrolysis of glutamine to glutamate and ammonia as part of the synthesis of IGP and AICAR. The resulting ammonia molecule is channeled to the active site of HisF. The chain is Imidazole glycerol phosphate synthase subunit HisH from Neisseria gonorrhoeae (strain ATCC 700825 / FA 1090).